Consider the following 494-residue polypeptide: 3-octaprenyl-4-hydroxybenzoate carboxy-lyase (494 aa).

Asn-172 contributes to the Mn(2+) binding site. Prenylated FMN-binding positions include 175–177 (IYR), 189–191 (RWL), and 194–195 (RG). Residue Glu-238 coordinates Mn(2+). Residue Asp-287 is the Proton donor of the active site.

The protein belongs to the UbiD family. Homohexamer. Requires prenylated FMN as cofactor. Mn(2+) serves as cofactor.

It is found in the cell membrane. The enzyme catalyses a 4-hydroxy-3-(all-trans-polyprenyl)benzoate + H(+) = a 2-(all-trans-polyprenyl)phenol + CO2. It participates in cofactor biosynthesis; ubiquinone biosynthesis. Catalyzes the decarboxylation of 3-octaprenyl-4-hydroxy benzoate to 2-octaprenylphenol, an intermediate step in ubiquinone biosynthesis. In Erwinia tasmaniensis (strain DSM 17950 / CFBP 7177 / CIP 109463 / NCPPB 4357 / Et1/99), this protein is 3-octaprenyl-4-hydroxybenzoate carboxy-lyase.